The following is a 130-amino-acid chain: Small ribosomal subunit protein uS11c (130 aa).

This sequence belongs to the universal ribosomal protein uS11 family. In terms of assembly, part of the 30S ribosomal subunit.

It localises to the plastid. The protein resides in the chloroplast. This Spirogyra maxima (Green alga) protein is Small ribosomal subunit protein uS11c.